A 219-amino-acid polypeptide reads, in one-letter code: Deoxyribose-phosphate aldolase (219 aa).

Catalysis depends on aspartate 89, which acts as the Proton donor/acceptor. The active-site Schiff-base intermediate with acetaldehyde is lysine 151. Lysine 180 serves as the catalytic Proton donor/acceptor.

This sequence belongs to the DeoC/FbaB aldolase family. DeoC type 1 subfamily.

The protein resides in the cytoplasm. The catalysed reaction is 2-deoxy-D-ribose 5-phosphate = D-glyceraldehyde 3-phosphate + acetaldehyde. It functions in the pathway carbohydrate degradation; 2-deoxy-D-ribose 1-phosphate degradation; D-glyceraldehyde 3-phosphate and acetaldehyde from 2-deoxy-alpha-D-ribose 1-phosphate: step 2/2. Functionally, catalyzes a reversible aldol reaction between acetaldehyde and D-glyceraldehyde 3-phosphate to generate 2-deoxy-D-ribose 5-phosphate. This is Deoxyribose-phosphate aldolase from Clostridioides difficile (strain 630) (Peptoclostridium difficile).